The following is a 511-amino-acid chain: Piperic acid synthase CYP719A37 (511 aa).

A helical transmembrane segment spans residues 7–27 (VDPALFSAFVSIIFFFLGMFL). Cysteine 455 is a binding site for heme.

Belongs to the cytochrome P450 family. Heme is required as a cofactor. As to expression, specifically expressed in immature fruits and roots. Barely detectable in young leaves and flowering spadices.

The protein localises to the membrane. It is found in the endoplasmic reticulum membrane. The enzyme catalyses (E,E)-feruperate + reduced [NADPH--hemoprotein reductase] + O2 = (E,E)-piperate + oxidized [NADPH--hemoprotein reductase] + 2 H2O + H(+). The protein operates within aromatic compound metabolism. Its function is as follows. Cytochrome P450 monooxygenase involved in the biosynthesis of aromatic piperamides natural products such as piperine (1-piperoyl-piperidine), the pungent principle contributing, together with several terpenoids, to the aromatic properties of black pepper fruits, and displaying numerous pharmacological activities such as antiproliferative, antitumor, antiangiogenesis, antioxidant, antidiabetic, antiobesity, cardioprotective, antimicrobial, antiaging, and immunomodulatory effects. Catalyzes the conversion of feruperic acid (5-(4-hydroxy-3-methoxyphenyl)-2,4-pentadienoic acid) to piperic acid. Inactive toward ferulic acid and feruperine. In Piper nigrum (Black pepper), this protein is Piperic acid synthase CYP719A37.